Here is an 800-residue protein sequence, read N- to C-terminus: Protein MICRORCHIDIA 4 (800 aa).

2 disordered regions span residues Met1–Asp76 and Ala552–Ser702. Polar residues predominate over residues Asn9–Thr18. A compositionally biased stretch (low complexity) spans Glu36–Gly47. Basic and acidic residues-rich tracts occupy residues Ser559–Pro578 and Val628–Gly641. A compositionally biased stretch (acidic residues) spans Asn666–Ser675. The stretch at Arg699–Glu766 forms a coiled coil. 2 consecutive short sequence motifs (nuclear localization signal) follow at residues Asp716 to Leu723 and Leu735 to Glu742.

The protein belongs to the MORC ATPase protein family. Homodimer and heterodimer. Component of an RNA-directed DNA methylation (RdDM) complex. Forms homomeric complexes. The cofactor is Mg(2+). Mn(2+) is required as a cofactor.

It is found in the nucleus. Its function is as follows. Exhibits ATPase activity. Binds DNA/RNA in a non-specific manner and exhibits endonuclease activity. Probably involved in DNA repair. Involved in RNA-directed DNA methylation (RdDM) as a component of the RdDM machinery and required for gene silencing. May also be involved in the regulation of chromatin architecture to maintain gene silencing. Together with MORC7, acts to suppress a wide set of non-methylated protein-coding genes, especially involved in pathogen response. Positive regulator of defense against the oomycete Hyaloperonospora arabidopsidis (Hpa). This is Protein MICRORCHIDIA 4 from Arabidopsis thaliana (Mouse-ear cress).